We begin with the raw amino-acid sequence, 603 residues long: Elongation factor 4 (603 aa).

The 183-residue stretch at 5 to 187 (RHIRNFCIIA…AVVNFVPPPK (183 aa)) folds into the tr-type G domain. GTP contacts are provided by residues 17–22 (DHGKST) and 134–137 (NKID).

The protein belongs to the TRAFAC class translation factor GTPase superfamily. Classic translation factor GTPase family. LepA subfamily.

The protein resides in the cell membrane. The enzyme catalyses GTP + H2O = GDP + phosphate + H(+). In terms of biological role, required for accurate and efficient protein synthesis under certain stress conditions. May act as a fidelity factor of the translation reaction, by catalyzing a one-codon backward translocation of tRNAs on improperly translocated ribosomes. Back-translocation proceeds from a post-translocation (POST) complex to a pre-translocation (PRE) complex, thus giving elongation factor G a second chance to translocate the tRNAs correctly. Binds to ribosomes in a GTP-dependent manner. The protein is Elongation factor 4 of Symbiobacterium thermophilum (strain DSM 24528 / JCM 14929 / IAM 14863 / T).